A 20-amino-acid polypeptide reads, in one-letter code: AYERQFYPGATSVAENNIGH.

The segment at 1 to 20 (AYERQFYPGATSVAENNIGH) is disordered.

It belongs to the methyl-coenzyme M reductase gamma subunit family. In terms of assembly, MCR from M.thermophila is a heterotrimer composed of an alpha, a beta, and a gamma subunit. Coenzyme F430 is required as a cofactor.

The protein localises to the cytoplasm. The enzyme catalyses coenzyme B + methyl-coenzyme M = methane + coenzyme M-coenzyme B heterodisulfide. Its pathway is one-carbon metabolism; methyl-coenzyme M reduction; methane from methyl-coenzyme M: step 1/1. Component of the methyl-coenzyme M reductase (MCR) I that catalyzes the reductive cleavage of methyl-coenzyme M (CoM-S-CH3 or 2-(methylthio)ethanesulfonate) using coenzyme B (CoB or 7-mercaptoheptanoylthreonine phosphate) as reductant which results in the production of methane and the mixed heterodisulfide of CoB and CoM (CoM-S-S-CoB). This is the final step in methanogenesis. This is Methyl-coenzyme M reductase subunit gamma from Methanosarcina thermophila.